A 100-amino-acid chain; its full sequence is Coiled-coil domain-containing protein 167 (100 aa).

The stretch at 14–81 forms a coiled coil; it reads VASEIDRVEE…VLRGENRRNM (68 aa). Residues 82-99 traverse the membrane as a helical segment; sequence MLSVALLAISALFYYTFI.

The protein resides in the membrane. In Danio rerio (Zebrafish), this protein is Coiled-coil domain-containing protein 167 (ccdc167).